A 275-amino-acid polypeptide reads, in one-letter code: Methylglyoxal reductase DkgA (275 aa).

The Proton donor role is filled by Tyr-51. Position 107 (His-107) interacts with substrate. An NADP(+)-binding site is contributed by 187–241 (SPLAQGGEGVFDQKVIRELADKYGKTPAQIVIRWHLDCGLVVIPKSVTPSRIAEN).

Belongs to the aldo/keto reductase family. As to quaternary structure, monomer.

It localises to the cytoplasm. It catalyses the reaction hydroxyacetone + NADP(+) = methylglyoxal + NADPH + H(+). In terms of biological role, aldo-keto reductase that significantly contributes to cellular methylglyoxal detoxification by catalyzing the NADPH-dependent conversion of methylglyoxal to acetol. The polypeptide is Methylglyoxal reductase DkgA (Salmonella typhimurium (strain LT2 / SGSC1412 / ATCC 700720)).